The chain runs to 63 residues: Male-specific sperm protein Mst84Da (63 aa).

This sequence belongs to the MST(3)CGP family. Testis.

This Drosophila melanogaster (Fruit fly) protein is Male-specific sperm protein Mst84Da (Mst84Da).